Here is a 184-residue protein sequence, read N- to C-terminus: 1,6-anhydro-N-acetylmuramyl-L-alanine amidase AmpD (184 aa).

Positions 30–171 (QDISLLVIHY…ISPKRKIDPG (142 aa)) constitute an N-acetylmuramoyl-L-alanine amidase domain. His38 is a binding site for Zn(2+). Residue Glu120 is the Proton acceptor of the active site. Zn(2+) contacts are provided by His159 and Asp169.

The protein belongs to the N-acetylmuramoyl-L-alanine amidase 2 family. It depends on Zn(2+) as a cofactor.

It localises to the cytoplasm. The catalysed reaction is Hydrolyzes the link between N-acetylmuramoyl residues and L-amino acid residues in certain cell-wall glycopeptides.. Functionally, involved in cell wall peptidoglycan recycling. Specifically cleaves the amide bond between the lactyl group of N-acetylmuramic acid and the alpha-amino group of the L-alanine in degradation products containing an anhydro N-acetylmuramyl moiety. In Haemophilus influenzae (strain ATCC 51907 / DSM 11121 / KW20 / Rd), this protein is 1,6-anhydro-N-acetylmuramyl-L-alanine amidase AmpD (ampD).